We begin with the raw amino-acid sequence, 544 residues long: High affinity immunoglobulin alpha and immunoglobulin mu Fc receptor (544 aa).

The signal sequence occupies residues 1–16; it reads MPLFLILCLLQGSSFA. Residues 17–462 lie on the Extracellular side of the membrane; that stretch reads LPQKRPHPRW…TFPEDESSSR (446 aa). One can recognise an Ig-like V-type domain in the interval 61 to 169; the sequence is PNALKGSRLV…NMLFLSMNLT (109 aa). The segment at 75-97 is mediates immunoglobulin Fc fragment-binding; the sequence is GGAVTIQCHYAPSSVNRHQRKYW. Cys82 and Cys153 are disulfide-bonded. Asn167 carries N-linked (GlcNAc...) asparagine glycosylation. The segment at 218–325 is disordered; the sequence is DTVASTPGTS…TTKADRPRED (108 aa). 2 stretches are compositionally biased toward polar residues: residues 220–232 and 280–291; these read VAST…TTAS and ASKSRSMSNTTE. Residues 307-325 are compositionally biased toward basic and acidic residues; sequence ASKDRREITTTKADRPRED. The helical transmembrane segment at 463-483 threads the bilayer; it reads TLAPVSTMLALFMLMALVLLQ. At 484–544 the chain is on the cytoplasmic side; the sequence is RKLRRRRTSQ…LTAPERNPGP (61 aa). The tract at residues 511-544 is disordered; sequence PQPDQLPHVERKMLQDDSLPAGASLTAPERNPGP.

As to quaternary structure, interacts with IGHM; this interaction facilitates the endocytosis of IgM-coated microbes or IgM-antigen immune complexes. Post-translationally, N-glycosylated.

Its subcellular location is the cell membrane. Functions as a receptor for the Fc fragment of IgA and IgM. Binds IgA and IgM with high affinity and mediates their endocytosis. May function in the immune response to microbes mediated by IgA and IgM. This chain is High affinity immunoglobulin alpha and immunoglobulin mu Fc receptor (FCAMR), found in Pongo abelii (Sumatran orangutan).